A 417-amino-acid chain; its full sequence is Secernin-3 (417 aa).

A propeptide spanning residues 1 to 5 (MYPRS) is cleaved from the precursor. Residue Cys6 is part of the active site. A Glyoxylic acid (Cys); alternate modification is found at Cys6. Cys6 bears the Pyruvic acid (Cys); alternate mark.

Belongs to the peptidase C69 family. Secernin subfamily.

Plays a role in thermal nociception. This Danio rerio (Zebrafish) protein is Secernin-3 (scrn3).